The sequence spans 506 residues: MKNTLFHRLKRPIAAAFVGALTTLAFAPYQIWLVALITPALLLILIHGQSRRQALWTGYAWGFGQFASGISWVYVSIAGFGGMPLAANLFLMGALIAYLAIYPALFTWSYQRFFAKATLLNLLLAAPALWLIADWLRGWVMTGFPWLWLGYSQIDSPLASFAPIGGVELLTLLLLVGAGAIAYAVIHKRWSMLLIPTVLLSTGYGLSHWDWVTPQPDKTTKVALIQGNVDQNLKWLPSQRWPTIMKYTDLSRENWDADIIIWPEAAIPAFEVELPSYLSNLDSAAKMNQSAIISGIVNQAEDGQFYNSILAVGLTPYGDYSFDLTERYHKHHLLPFGEFVPFEQILRPLAPFFNLPMSSFSRGDFVQPNIVANGHPMAPALCYEIIFNEQVRQNVTDDTDFLLTLSNDAWFGRSIGPLQHMEIARMRALELGKPLIRSTNNGLTAVTDHRGKIIASIPQFETAVLRAELTPTQGQTPYHQLGSWPLYIWVALSLALAWWRKRRTNA.

6 helical membrane-spanning segments follow: residues 26 to 46 (FAPY…LILI), 66 to 86 (FASG…MPLA), 89 to 109 (LFLM…FTWS), 113 to 133 (FFAK…WLIA), 166 to 186 (GVEL…YAVI), and 192 to 212 (MLLI…WDWV). Positions 225–471 (IQGNVDQNLK…TAVLRAELTP (247 aa)) constitute a CN hydrolase domain. The active-site Proton acceptor is the E264. K330 is an active-site residue. C382 serves as the catalytic Nucleophile. Residues 479-499 (HQLGSWPLYIWVALSLALAWW) traverse the membrane as a helical segment.

Belongs to the CN hydrolase family. Apolipoprotein N-acyltransferase subfamily.

Its subcellular location is the cell inner membrane. It catalyses the reaction N-terminal S-1,2-diacyl-sn-glyceryl-L-cysteinyl-[lipoprotein] + a glycerophospholipid = N-acyl-S-1,2-diacyl-sn-glyceryl-L-cysteinyl-[lipoprotein] + a 2-acyl-sn-glycero-3-phospholipid + H(+). The protein operates within protein modification; lipoprotein biosynthesis (N-acyl transfer). In terms of biological role, catalyzes the phospholipid dependent N-acylation of the N-terminal cysteine of apolipoprotein, the last step in lipoprotein maturation. This Vibrio vulnificus (strain CMCP6) protein is Apolipoprotein N-acyltransferase.